Consider the following 156-residue polypeptide: Melatonin receptor type 1A (156 aa).

Transmembrane regions (helical) follow at residues 19–39 (LCYV…NLQT), 62–82 (TIAL…FCYL), and 115–135 (FVVF…GLIV).

The protein belongs to the G-protein coupled receptor 1 family. In terms of tissue distribution, at least in the brain, more precisely in the pars tuberalis and the suprachiasmatic nucleus.

It localises to the cell membrane. Functionally, high affinity receptor for melatonin. Likely to mediate the reproductive and circadian actions of melatonin. The activity of this receptor is mediated by pertussis toxin sensitive G proteins that inhibit adenylate cyclase activity. Possibly involved in sleep induction, by melatonin activation of the potassium channel KCNMA1/BK and the dissociation of G-beta and G-gamma subunits, thereby decreasing synaptic transmission. In Rattus norvegicus (Rat), this protein is Melatonin receptor type 1A (Mtnr1a).